The chain runs to 438 residues: MSTQLRNNPMKVALASMVGTAIEFFDYYIYAAAAVLVFNTQFFHSDDPLSNDLLSLSTLALAFFARPIGSALFGHFGDKIGRKKTLVASLVLMGGSTVVIGLLPNYAQIGIWAPILLCVCRVGQGIGLGGEWGGAALVATENAPEGKRAWYGTFPQLGAPIGLFVANGTFFLVSYLLGHNALVEWAWRIPFVSSILLVAVGLYVRLTLHESHVFVEAEQKGKKLNAPVSVVFTKHLKPMVIGTFIMVATYSLFYIMTAFAQAYSRTAPKLSEAGYALGLGIPANTFTGLLLISAIVFGIFISISGFYADKIGRRKWLIWVTIAIGVLGLAMPLFLENGTPVSVFAFLVIGMAIMGMTFGPMAALLPELFPTEVRYSGASLAYNLASIIGATIAAMISLKINASFGVMGVGIYLAINALMTFLALLASKETKNVDLTEI.

Residues 1–17 (MSTQLRNNPMKVALASM) lie on the Cytoplasmic side of the membrane. Residues 18 to 38 (VGTAIEFFDYYIYAAAAVLVF) form a helical membrane-spanning segment. Residues 39 to 52 (NTQFFHSDDPLSND) are Periplasmic-facing. The helical transmembrane segment at 53-73 (LLSLSTLALAFFARPIGSALF) threads the bilayer. The Cytoplasmic portion of the chain corresponds to 74-85 (GHFGDKIGRKKT). A helical transmembrane segment spans residues 86 to 106 (LVASLVLMGGSTVVIGLLPNY). At 107–115 (AQIGIWAPI) the chain is on the periplasmic side. Residues 116-136 (LLCVCRVGQGIGLGGEWGGAA) traverse the membrane as a helical segment. The Cytoplasmic segment spans residues 137 to 156 (LVATENAPEGKRAWYGTFPQ). A helical membrane pass occupies residues 157 to 177 (LGAPIGLFVANGTFFLVSYLL). Residues 178–181 (GHNA) are Periplasmic-facing. The helical transmembrane segment at 182 to 202 (LVEWAWRIPFVSSILLVAVGL) threads the bilayer. The Cytoplasmic portion of the chain corresponds to 203 to 239 (YVRLTLHESHVFVEAEQKGKKLNAPVSVVFTKHLKPM). A helical membrane pass occupies residues 240–260 (VIGTFIMVATYSLFYIMTAFA). Residues 261-286 (QAYSRTAPKLSEAGYALGLGIPANTF) are Periplasmic-facing. A helical transmembrane segment spans residues 287-307 (TGLLLISAIVFGIFISISGFY). Over 308–314 (ADKIGRR) the chain is Cytoplasmic. A helical transmembrane segment spans residues 315 to 336 (KWLIWVTIAIGVLGLAMPLFLE). The Periplasmic segment spans residues 337-342 (NGTPVS). The helical transmembrane segment at 343–363 (VFAFLVIGMAIMGMTFGPMAA) threads the bilayer. Over 364 to 377 (LLPELFPTEVRYSG) the chain is Cytoplasmic. Residues 378–398 (ASLAYNLASIIGATIAAMISL) traverse the membrane as a helical segment. Residues 399-405 (KINASFG) lie on the Periplasmic side of the membrane. Residues 406 to 426 (VMGVGIYLAINALMTFLALLA) traverse the membrane as a helical segment. Residues 427 to 438 (SKETKNVDLTEI) are Cytoplasmic-facing.

It belongs to the major facilitator superfamily. Sugar transporter (TC 2.A.1.1) family.

The protein resides in the cell inner membrane. The polypeptide is Putative metabolite transport protein HI_0281 (Haemophilus influenzae (strain ATCC 51907 / DSM 11121 / KW20 / Rd)).